The following is a 314-amino-acid chain: Methionyl-tRNA formyltransferase (314 aa).

112 to 115 (SLLP) provides a ligand contact to (6S)-5,6,7,8-tetrahydrofolate.

The protein belongs to the Fmt family.

The enzyme catalyses L-methionyl-tRNA(fMet) + (6R)-10-formyltetrahydrofolate = N-formyl-L-methionyl-tRNA(fMet) + (6S)-5,6,7,8-tetrahydrofolate + H(+). In terms of biological role, attaches a formyl group to the free amino group of methionyl-tRNA(fMet). The formyl group appears to play a dual role in the initiator identity of N-formylmethionyl-tRNA by promoting its recognition by IF2 and preventing the misappropriation of this tRNA by the elongation apparatus. This is Methionyl-tRNA formyltransferase from Buchnera aphidicola subsp. Acyrthosiphon pisum (strain 5A).